The following is a 195-amino-acid chain: Probable chorismate pyruvate-lyase (195 aa).

Substrate-binding residues include R79, L117, and E180.

The protein belongs to the UbiC family.

The protein localises to the cytoplasm. It catalyses the reaction chorismate = 4-hydroxybenzoate + pyruvate. It participates in cofactor biosynthesis; ubiquinone biosynthesis. In terms of biological role, removes the pyruvyl group from chorismate, with concomitant aromatization of the ring, to provide 4-hydroxybenzoate (4HB) for the ubiquinone pathway. The sequence is that of Probable chorismate pyruvate-lyase from Ralstonia nicotianae (strain ATCC BAA-1114 / GMI1000) (Ralstonia solanacearum).